Here is a 620-residue protein sequence, read N- to C-terminus: UDP-glucose:protein N-beta-glucosyltransferase (620 aa).

This sequence belongs to the glycosyltransferase 41 family. The cofactor is Does not require a metal cofactor..

Its subcellular location is the cytoplasm. The enzyme catalyses L-asparaginyl-[protein] + UDP-alpha-D-glucose = N(4)-(beta-D-glucosyl)-L-asparaginyl-[protein] + UDP + H(+). Its pathway is protein modification; protein glycosylation. Functionally, inverting glycosyltransferase that catalyzes the transfer of one glucose moiety from UDP-glucose to an asparagine residue in peptides and proteins containing the NX(S/T) motif, resulting in their modification with a beta-linked 1,N-glucose. Likely acts as a key component of a general protein glycosylation system. Also accepts UDP-galactose as a substrate donor, albeit with low efficiency. Cannot use UDP-GlcNAc or UDP-GalNAc as substrate donor. In Actinobacillus pleuropneumoniae serotype 7 (strain AP76), this protein is UDP-glucose:protein N-beta-glucosyltransferase.